The primary structure comprises 41 residues: Peptide Hact-SCRiP1 (41 aa).

4 cysteine pairs are disulfide-bonded: Cys5/Cys37, Cys12/Cys31, Cys19/Cys38, and Cys26/Cys39.

Expressed in tentacles.

It localises to the nematocyst. It is found in the secreted. Functionally, peptide with unknown function. Does not exhibit any effect on human ion channel TRPV1 in a Xenopus laevis oocytes assay. In Heliofungia actiniformis (Mushroom coral), this protein is Peptide Hact-SCRiP1.